Here is a 432-residue protein sequence, read N- to C-terminus: Serine--tRNA ligase (432 aa).

239–241 provides a ligand contact to L-serine; the sequence is TSE. 270–272 serves as a coordination point for ATP; sequence RSE. Residue E293 coordinates L-serine. 357–360 provides a ligand contact to ATP; sequence EISS. Residue S392 coordinates L-serine.

This sequence belongs to the class-II aminoacyl-tRNA synthetase family. Type-1 seryl-tRNA synthetase subfamily. Homodimer. The tRNA molecule binds across the dimer.

The protein resides in the cytoplasm. The enzyme catalyses tRNA(Ser) + L-serine + ATP = L-seryl-tRNA(Ser) + AMP + diphosphate + H(+). It carries out the reaction tRNA(Sec) + L-serine + ATP = L-seryl-tRNA(Sec) + AMP + diphosphate + H(+). The protein operates within aminoacyl-tRNA biosynthesis; selenocysteinyl-tRNA(Sec) biosynthesis; L-seryl-tRNA(Sec) from L-serine and tRNA(Sec): step 1/1. Functionally, catalyzes the attachment of serine to tRNA(Ser). Is also able to aminoacylate tRNA(Sec) with serine, to form the misacylated tRNA L-seryl-tRNA(Sec), which will be further converted into selenocysteinyl-tRNA(Sec). The chain is Serine--tRNA ligase from Methylibium petroleiphilum (strain ATCC BAA-1232 / LMG 22953 / PM1).